The chain runs to 239 residues: Riboflavin synthase (239 aa).

Lumazine-binding repeat units lie at residues 1–105 (MFTG…MGGH) and 106–205 (VVQG…EKQI). Residues 4–6 (GLV), 54–56 (CLT), 70–75 (GISPET), 109–111 (GHV), Lys-145, 154–156 (SLT), and 170–175 (SMVSYT) each bind 2,4-dihydroxypteridine.

As to quaternary structure, homotrimer.

The enzyme catalyses 2 6,7-dimethyl-8-(1-D-ribityl)lumazine + H(+) = 5-amino-6-(D-ribitylamino)uracil + riboflavin. It participates in cofactor biosynthesis; riboflavin biosynthesis; riboflavin from 2-hydroxy-3-oxobutyl phosphate and 5-amino-6-(D-ribitylamino)uracil: step 2/2. Catalyzes the dismutation of two molecules of 6,7-dimethyl-8-ribityllumazine, resulting in the formation of riboflavin and 5-amino-6-(D-ribitylamino)uracil. In Meyerozyma guilliermondii (strain ATCC 6260 / CBS 566 / DSM 6381 / JCM 1539 / NBRC 10279 / NRRL Y-324) (Yeast), this protein is Riboflavin synthase (RIB5).